The following is a 72-amino-acid chain: Translation initiation factor IF-1 1 (72 aa).

Residues 1–72 (MSKDDVIQMA…TRARIIFRAK (72 aa)) enclose the S1-like domain.

The protein belongs to the IF-1 family. Component of the 30S ribosomal translation pre-initiation complex which assembles on the 30S ribosome in the order IF-2 and IF-3, IF-1 and N-formylmethionyl-tRNA(fMet); mRNA recruitment can occur at any time during PIC assembly.

Its subcellular location is the cytoplasm. Its function is as follows. One of the essential components for the initiation of protein synthesis. Stabilizes the binding of IF-2 and IF-3 on the 30S subunit to which N-formylmethionyl-tRNA(fMet) subsequently binds. Helps modulate mRNA selection, yielding the 30S pre-initiation complex (PIC). Upon addition of the 50S ribosomal subunit IF-1, IF-2 and IF-3 are released leaving the mature 70S translation initiation complex. The chain is Translation initiation factor IF-1 1 from Polynucleobacter asymbioticus (strain DSM 18221 / CIP 109841 / QLW-P1DMWA-1) (Polynucleobacter necessarius subsp. asymbioticus).